Reading from the N-terminus, the 355-residue chain is Natterin-1 (355 aa).

An N-terminal signal peptide occupies residues 1-18 (MIPSVLLVTLLLLSWTSA). A propeptide spanning residues 19–27 (EKDLKVRVA) is cleaved from the precursor.

It belongs to the natterin family. Contains 4 disulfide bonds. As to expression, expressed by the venom gland.

Its subcellular location is the secreted. With respect to regulation, inhibited by tissue-kallikrein inhibitor TKI and trasylol. Plasma kallikrein inhibitor PKSI527 and classical inhibitors of serine-, metallo-, thiol- or aspartate-peptidases evokes a minor inhibition of the peptide digestion. Its function is as follows. Shows nociceptive, edema-inducing and kininogenase activity with release of kallidin from low molecular weight kininogen. The cleavage occurs at Met-Lys bonds. The protein is Natterin-1 of Thalassophryne nattereri (Copper Joe toadfish).